Here is a 430-residue protein sequence, read N- to C-terminus: Enolase (430 aa).

Position 163 (Gln163) interacts with (2R)-2-phosphoglycerate. Glu205 serves as the catalytic Proton donor. 3 residues coordinate Mg(2+): Asp242, Glu285, and Asp312. Residues Lys337, Arg366, Ser367, and Lys388 each coordinate (2R)-2-phosphoglycerate. Lys337 functions as the Proton acceptor in the catalytic mechanism.

Belongs to the enolase family. Mg(2+) serves as cofactor.

It localises to the cytoplasm. The protein localises to the secreted. It is found in the cell surface. The catalysed reaction is (2R)-2-phosphoglycerate = phosphoenolpyruvate + H2O. The protein operates within carbohydrate degradation; glycolysis; pyruvate from D-glyceraldehyde 3-phosphate: step 4/5. Its function is as follows. Catalyzes the reversible conversion of 2-phosphoglycerate (2-PG) into phosphoenolpyruvate (PEP). It is essential for the degradation of carbohydrates via glycolysis. The chain is Enolase from Maridesulfovibrio salexigens (strain ATCC 14822 / DSM 2638 / NCIMB 8403 / VKM B-1763) (Desulfovibrio salexigens).